A 374-amino-acid chain; its full sequence is MPTFRSNIVVFNLIARRAFTTTSTKNMGFVEKVRLLDYWKIQDSALQSEFPRSRLVLMVDRRLLVTKDQPDVQMVELSFDDLKQRLGEYGLQFDLSNSCLLDALSTDVDMIPLFGTSIDAADPPEDSPISKKEVLKQLGNSLGGRFTDIRMAMLTMREERQRNLLAKFQSLTKWASIYRRCPKCAAALKMRSSKSGAECVTCQRVYYPTFSPVSITLITDPTNEHALLVRHRGSAGGVFTAVAGFAHSGESMAECARREIAEEVGIEVDSIRSLDMSQPWPMPDSSLMIAHVAVAKIDQKISVCPDELETAQWFTRHQVKEALTTTLADPLLKNLPRTLDDRQTLHYIPPAGAIAHQMIRQWVDGKLENHNSRI.

Residues cysteine 181, cysteine 184, cysteine 199, and cysteine 202 each contribute to the Zn(2+) site. Substrate is bound by residues tyrosine 207, alanine 243–phenylalanine 245, glutamate 259, glutamate 263, and glutamate 307. A Nudix hydrolase domain is found at proline 208 to proline 336. The Mg(2+) site is built by alanine 243, glutamate 259, glutamate 263, and glutamate 307. The Nudix box motif lies at glycine 244 to glycine 265. Residues leucine 367 to asparagine 369 carry the Microbody targeting signal motif.

This sequence belongs to the Nudix hydrolase family. NudC subfamily. As to quaternary structure, homodimer. It depends on Mg(2+) as a cofactor. Mn(2+) serves as cofactor. The cofactor is Zn(2+).

The enzyme catalyses a 5'-end NAD(+)-phospho-ribonucleoside in mRNA + H2O = a 5'-end phospho-adenosine-phospho-ribonucleoside in mRNA + beta-nicotinamide D-ribonucleotide + 2 H(+). It catalyses the reaction NAD(+) + H2O = beta-nicotinamide D-ribonucleotide + AMP + 2 H(+). The catalysed reaction is NADH + H2O = reduced beta-nicotinamide D-ribonucleotide + AMP + 2 H(+). Its function is as follows. mRNA decapping enzyme that specifically removes the nicotinamide adenine dinucleotide (NAD) cap from a subset of mRNAs by hydrolyzing the diphosphate linkage to produce nicotinamide mononucleotide (NMN) and 5' monophosphate mRNA. The NAD-cap is present at the 5'-end of some RNAs; in contrast to the canonical N7 methylguanosine (m7G) cap, the NAD cap promotes mRNA decay. Mediates the hydrolysis of some nucleoside diphosphate derivatives. The chain is NAD-capped RNA hydrolase ndx-9 (ndx-9) from Caenorhabditis elegans.